We begin with the raw amino-acid sequence, 151 residues long: Testis-expressed protein 29 (151 aa).

The Extracellular portion of the chain corresponds to 1 to 56; that stretch reads MEYVLEVKNSPRHLLKQFTVCDVPLYDICDYNVSRDRCQELGCCFYEGVCYKKAVP. Residues 57 to 77 form a helical membrane-spanning segment; sequence IYIHVFSALIVIIAGAFVITI. Residues 78-151 lie on the Cytoplasmic side of the membrane; that stretch reads IYRVIQESRK…TITEAEETED (74 aa). The disordered stretch occupies residues 100–151; that stretch reads KSSEKAELASSSSKLGLKPASPGPPSAGPSMKSDEDKDDVTGTITEAEETED. Positions 107–119 are enriched in low complexity; that stretch reads LASSSSKLGLKPA.

It localises to the membrane. This chain is Testis-expressed protein 29 (TEX29), found in Homo sapiens (Human).